Reading from the N-terminus, the 153-residue chain is Histone H2B type W-T (153 aa).

Residues 1–54 (MATASAMAGPSSETTSEEQLITQEPKEANSTTSQKQSKQRKRGRHGPRRCHSNC) are disordered. Polar residues predominate over residues 11–36 (SSETTSEEQLITQEPKEANSTTSQKQ). Residues 37-52 (SKQRKRGRHGPRRCHS) show a composition bias toward basic residues.

The protein belongs to the histone H2B family. As to quaternary structure, can replace the conventional histone H2B in the nucleosome. The nucleosome is a histone octamer containing two molecules each of H2A, H2B, H3 and H4 assembled in one H3-H4 heterotetramer and two H2A-H2B heterodimers. The octamer wraps approximately 147 bp of DNA. Testis-specific (at protein level).

Its subcellular location is the nucleus membrane. It is found in the chromosome. It localises to the telomere. Its function is as follows. Atypical histone H2B that can form nucleosomes structurally and dynamically indistinguishable from those containing conventional H2B. Nucleosomes wrap and compact DNA into chromatin, limiting DNA accessibility to the cellular machineries which require DNA as a template. Histones thereby play a central role in transcription regulation, DNA repair, DNA replication and chromosomal stability. DNA accessibility is regulated via a complex set of post-translational modifications of histones, also called histone code, and nucleosome remodeling. However, unlike conventional H2B, does not recruit chromosome condensation factors and does not participate in the assembly of mitotic chromosomes. May be important for telomere function and play a role in spermatogenesis. The polypeptide is Histone H2B type W-T (Homo sapiens (Human)).